A 149-amino-acid chain; its full sequence is Nucleoside diphosphate kinase (149 aa).

6 residues coordinate ATP: lysine 9, phenylalanine 57, arginine 85, threonine 91, arginine 102, and asparagine 112. Catalysis depends on histidine 115, which acts as the Pros-phosphohistidine intermediate.

It belongs to the NDK family. As to quaternary structure, homotetramer. It depends on Mg(2+) as a cofactor.

The protein localises to the cytoplasm. It carries out the reaction a 2'-deoxyribonucleoside 5'-diphosphate + ATP = a 2'-deoxyribonucleoside 5'-triphosphate + ADP. The enzyme catalyses a ribonucleoside 5'-diphosphate + ATP = a ribonucleoside 5'-triphosphate + ADP. Functionally, major role in the synthesis of nucleoside triphosphates other than ATP. The ATP gamma phosphate is transferred to the NDP beta phosphate via a ping-pong mechanism, using a phosphorylated active-site intermediate. The protein is Nucleoside diphosphate kinase of Staphylococcus saprophyticus subsp. saprophyticus (strain ATCC 15305 / DSM 20229 / NCIMB 8711 / NCTC 7292 / S-41).